Here is a 385-residue protein sequence, read N- to C-terminus: 1-deoxy-D-xylulose 5-phosphate reductoisomerase (385 aa).

NADPH-binding residues include T10, G11, S12, I13, K37, and N124. K125 contributes to the 1-deoxy-D-xylulose 5-phosphate binding site. E126 serves as a coordination point for NADPH. Mn(2+) is bound at residue D150. 1-deoxy-D-xylulose 5-phosphate contacts are provided by S151, E152, S176, and H199. Residue E152 participates in Mn(2+) binding. G205 contacts NADPH. Residues S212, N217, K218, and E221 each contribute to the 1-deoxy-D-xylulose 5-phosphate site. E221 provides a ligand contact to Mn(2+).

This sequence belongs to the DXR family. It depends on Mg(2+) as a cofactor. Mn(2+) is required as a cofactor.

The catalysed reaction is 2-C-methyl-D-erythritol 4-phosphate + NADP(+) = 1-deoxy-D-xylulose 5-phosphate + NADPH + H(+). It participates in isoprenoid biosynthesis; isopentenyl diphosphate biosynthesis via DXP pathway; isopentenyl diphosphate from 1-deoxy-D-xylulose 5-phosphate: step 1/6. Its function is as follows. Catalyzes the NADPH-dependent rearrangement and reduction of 1-deoxy-D-xylulose-5-phosphate (DXP) to 2-C-methyl-D-erythritol 4-phosphate (MEP). This is 1-deoxy-D-xylulose 5-phosphate reductoisomerase from Clostridium novyi (strain NT).